The sequence spans 263 residues: HTH-type transcriptional repressor NanR (263 aa).

Residues 1–23 form a disordered region; it reads MSPMNAFDPQAEDSTTTIGRNLR. An HTH gntR-type domain is found at 30-98; that stretch reads KKLSEMVEEE…NGERARVSRP (69 aa). A DNA-binding region (H-T-H motif) is located at residues 58-77; it reads ERELMAFFNVGRPSVREALA.

Belongs to the NanR family.

Transcriptional repressor that controls expression of the genes required for the catabolism of sialic acids. The sequence is that of HTH-type transcriptional repressor NanR from Escherichia coli O45:K1 (strain S88 / ExPEC).